A 443-amino-acid polypeptide reads, in one-letter code: Putative transporter AmpG 1 (443 aa).

Transmembrane regions (helical) follow at residues 5-25 (SHIY…MITG), 42-62 (IGML…APVF), 78-98 (LSWI…LSFL), 104-124 (LVLL…QDTI), 143-163 (GIYI…AIYL), 171-191 (AIYK…ILVA), 230-250 (FNYF…GFYF), 254-274 (DINL…YRLP), 299-319 (VCKF…GIIM), 324-344 (ILYS…FFIL), 354-374 (ILFI…TAYI), 393-413 (LSSM…YMVV), and 415-435 (FGWQ…LLIL).

It belongs to the major facilitator superfamily.

It is found in the cell inner membrane. The sequence is that of Putative transporter AmpG 1 (ampG1) from Rickettsia prowazekii (strain Madrid E).